The chain runs to 451 residues: Tubulin alpha-2 chain (451 aa).

Glutamine 11 lines the GTP pocket. The residue at position 40 (lysine 40) is an N6-acetyllysine. GTP-binding residues include glutamate 71, glycine 144, threonine 145, threonine 179, asparagine 206, and asparagine 228. Position 71 (glutamate 71) interacts with Mg(2+). The active site involves glutamate 254.

Belongs to the tubulin family. Dimer of alpha and beta chains. A typical microtubule is a hollow water-filled tube with an outer diameter of 25 nm and an inner diameter of 15 nM. Alpha-beta heterodimers associate head-to-tail to form protofilaments running lengthwise along the microtubule wall with the beta-tubulin subunit facing the microtubule plus end conferring a structural polarity. Microtubules usually have 13 protofilaments but different protofilament numbers can be found in some organisms and specialized cells. Mg(2+) is required as a cofactor. Post-translationally, undergoes a tyrosination/detyrosination cycle, the cyclic removal and re-addition of a C-terminal tyrosine residue by the enzymes tubulin tyrosine carboxypeptidase (TTCP) and tubulin tyrosine ligase (TTL), respectively. Acetylation of alpha chains at Lys-40 stabilizes microtubules and affects affinity and processivity of microtubule motors. This modification has a role in multiple cellular functions, ranging from cell motility, cell cycle progression or cell differentiation to intracellular trafficking and signaling.

It localises to the cytoplasm. The protein resides in the cytoskeleton. It catalyses the reaction GTP + H2O = GDP + phosphate + H(+). In terms of biological role, tubulin is the major constituent of microtubules, a cylinder consisting of laterally associated linear protofilaments composed of alpha- and beta-tubulin heterodimers. Microtubules grow by the addition of GTP-tubulin dimers to the microtubule end, where a stabilizing cap forms. Below the cap, tubulin dimers are in GDP-bound state, owing to GTPase activity of alpha-tubulin. In Oryza sativa subsp. japonica (Rice), this protein is Tubulin alpha-2 chain (TUBA).